The chain runs to 422 residues: Phospholipase D Z (422 aa).

The N-terminal stretch at 1–18 (MMMKLLFLIALFGCVVNS) is a signal peptide. Residue Asn-53 is glycosylated (N-linked (GlcNAc...) asparagine). The region spanning 148–175 (GAGILHTKVIVVDQVSAYLGSANLDWRS) is the PLD phosphodiesterase 1 domain. Catalysis depends on residues His-153, Lys-155, and Asp-160. Asn-225 and Asn-320 each carry an N-linked (GlcNAc...) asparagine glycan. A PLD phosphodiesterase 2 domain is found at 357 to 383 (FTRVNHAKYMVTDEQSYVGTSNWSEDY). Catalysis depends on residues His-362, Lys-364, and Asp-369. Residue Asn-378 is glycosylated (N-linked (GlcNAc...) asparagine).

This sequence belongs to the phospholipase D family.

It catalyses the reaction a 1,2-diacyl-sn-glycero-3-phosphocholine + H2O = a 1,2-diacyl-sn-glycero-3-phosphate + choline + H(+). Inhibited by butan-1-ol. Hydrolyzes membrane phospholipids, such as PtdCho (phosphatidylcholine), producing the free headgroup and PtdOH (phosphatidic acid; signaling molecule on its own). This is Phospholipase D Z (pldZ) from Dictyostelium discoideum (Social amoeba).